Here is a 260-residue protein sequence, read N- to C-terminus: Ribosomal RNA small subunit methyltransferase J (260 aa).

S-adenosyl-L-methionine-binding positions include 101–102, 117–118, 153–154, and D176; these read RD, ER, and SS.

Belongs to the methyltransferase superfamily. RsmJ family.

The protein resides in the cytoplasm. It carries out the reaction guanosine(1516) in 16S rRNA + S-adenosyl-L-methionine = N(2)-methylguanosine(1516) in 16S rRNA + S-adenosyl-L-homocysteine + H(+). Functionally, specifically methylates the guanosine in position 1516 of 16S rRNA. The sequence is that of Ribosomal RNA small subunit methyltransferase J from Aliivibrio salmonicida (strain LFI1238) (Vibrio salmonicida (strain LFI1238)).